A 468-amino-acid chain; its full sequence is MSKQQIGVVGMAVMGRNLALNIESRGYTVSIFNRSREKTEEVIAENPGKKLVPYYTVKEFVESLETPRRILLMVKAGAGTDAAIDSLKPYLDKGDIIIDGGNTFFQDTIRRNRELSAEGFNFIGTGVSGGEEGALKGPSIMPGGQKEAYELVAPILTKIAAVAEDGEPCVTYIGADGAGHYVKMVHNGIEYGDMQLIAEAYSLLKGGLNLTNEELAQTFTEWNNGELSSYLIDITKDIFTKKDEDGNYLVDVILDEAANKGTGKWTSQSALDLGEPLSLITESVFARYISSLKDQRVAASKVLSGPQAQPAGDKAEFIEKVRRALYLGKIVSYAQGFSQLRAASEEYNWDLNYGEIAKIFRAGCIIRAQFLQKITDAYAENPQIANLLLAPYFKQIADDYQQALRDVVAYAVQNGIPVPTFSAAVAYYDSYRAAVLPANLIQAQRDYFGAHTYKRIDKEGVFHTEWLD.

NADP(+) is bound by residues 10 to 15, 33 to 35, 74 to 76, and Asn-102; these read GMAVMG, NRS, and VKA. Residues Asn-102 and 128–130 contribute to the substrate site; that span reads SGG. Catalysis depends on Lys-183, which acts as the Proton acceptor. 186–187 provides a ligand contact to substrate; that stretch reads HN. Glu-190 (proton donor) is an active-site residue. Tyr-191, Lys-260, Arg-287, Arg-445, and His-451 together coordinate substrate.

This sequence belongs to the 6-phosphogluconate dehydrogenase family. As to quaternary structure, homodimer.

It carries out the reaction 6-phospho-D-gluconate + NADP(+) = D-ribulose 5-phosphate + CO2 + NADPH. Its pathway is carbohydrate degradation; pentose phosphate pathway; D-ribulose 5-phosphate from D-glucose 6-phosphate (oxidative stage): step 3/3. In terms of biological role, catalyzes the oxidative decarboxylation of 6-phosphogluconate to ribulose 5-phosphate and CO(2), with concomitant reduction of NADP to NADPH. The protein is 6-phosphogluconate dehydrogenase, decarboxylating (gnd) of Escherichia coli (strain K12).